Reading from the N-terminus, the 209-residue chain is Thymidylate kinase (209 aa).

10 to 17 (GPEGAGKT) lines the ATP pocket.

The protein belongs to the thymidylate kinase family.

It catalyses the reaction dTMP + ATP = dTDP + ADP. Its function is as follows. Phosphorylation of dTMP to form dTDP in both de novo and salvage pathways of dTTP synthesis. The sequence is that of Thymidylate kinase from Anoxybacillus flavithermus (strain DSM 21510 / WK1).